We begin with the raw amino-acid sequence, 671 residues long: UvrABC system protein B (671 aa).

Residues 31-414 enclose the Helicase ATP-binding domain; that stretch reads DGFEQGEKAQ…ELNQTDHKVE (384 aa). 44–51 lines the ATP pocket; the sequence is GATGTGKT. A Beta-hairpin motif is present at residues 97-120; the sequence is YYDYYQPEAYVPQSDTYIEKDSSI. A Helicase C-terminal domain is found at 435-601; that stretch reads QIDDLVGEVN…TIVKPIRDVI (167 aa). The 36-residue stretch at 630 to 665 folds into the UVR domain; the sequence is QNMIKTLTAQMQEAAKKLDFEEAANLRDAIMDLKKQ.

It belongs to the UvrB family. In terms of assembly, forms a heterotetramer with UvrA during the search for lesions. Interacts with UvrC in an incision complex.

The protein resides in the cytoplasm. Functionally, the UvrABC repair system catalyzes the recognition and processing of DNA lesions. A damage recognition complex composed of 2 UvrA and 2 UvrB subunits scans DNA for abnormalities. Upon binding of the UvrA(2)B(2) complex to a putative damaged site, the DNA wraps around one UvrB monomer. DNA wrap is dependent on ATP binding by UvrB and probably causes local melting of the DNA helix, facilitating insertion of UvrB beta-hairpin between the DNA strands. Then UvrB probes one DNA strand for the presence of a lesion. If a lesion is found the UvrA subunits dissociate and the UvrB-DNA preincision complex is formed. This complex is subsequently bound by UvrC and the second UvrB is released. If no lesion is found, the DNA wraps around the other UvrB subunit that will check the other stand for damage. The chain is UvrABC system protein B from Lactobacillus johnsonii (strain CNCM I-12250 / La1 / NCC 533).